Reading from the N-terminus, the 1493-residue chain is Son of sevenless homolog (1493 aa).

The DH domain occupies 244–448 (TYESVAVDFL…ERVVGCVSDM (205 aa)). In terms of domain architecture, PH spans 496–606 (ELEKDGDLGM…WMAVLVKVTT (111 aa)). Positions 656 to 824 (GIPVIKCGTV…TILALIEKRV (169 aa)) constitute an N-terminal Ras-GEF domain. A Ras-GEF domain is found at 897-1164 (HPIEIGRQLT…YNKSLEIQPK (268 aa)). Disordered stretches follow at residues 1067 to 1091 (KSPPHGAAGAQKQQKDDLKASDPEN), 1165 to 1248 (GLDT…DDAP), and 1263 to 1493 (HPKI…SSNK). A compositionally biased stretch (basic and acidic residues) spans 1079 to 1088 (QQKDDLKASD). 2 stretches are compositionally biased toward polar residues: residues 1208–1231 (HSQNSHSAPHAMSSQSSTVPNTPL) and 1279–1289 (SRANQSNSVSL). A compositionally biased stretch (low complexity) spans 1308–1326 (STATSPTTLTTTTTPSSAG). Polar residues predominate over residues 1350 to 1361 (LTPSRDNSSPSA). Over residues 1381 to 1400 (STSSDVSSSPSTSGSTSSAT) the composition is skewed to low complexity. A compositionally biased stretch (basic and acidic residues) spans 1402-1417 (ENQEQLRVIFDREESH). Positions 1426–1435 (PLPPALPPPR) are enriched in pro residues. Over residues 1453-1464 (HNSNSPTLSSEQ) the composition is skewed to polar residues.

In terms of assembly, interacts with cmd-1 in the presence of Ca(2+).

Promotes the exchange of Ras-bound GDP by GTP. May regulate signaling pathways downstream of receptor tyrosine kinase, egl-15 and let-23. Required for larval and male spicule development, fluid homeostasis, vulva induction, spermatogenesis, and oogenesis by promoting meiosis prophase exit during oocyte maturation. Required for the delamination of G1 cell by promoting the loss of cell junctions and detachment from the excretory system during larval development. Plays a role in nicotinic acetylcholine receptor (nAChR)-mediated sensitivity to nicotine. Regulates synaptic levels of nAchR subunit lev-1 in the nerve cord. The sequence is that of Son of sevenless homolog from Caenorhabditis elegans.